The primary structure comprises 191 residues: Prostaglandin-H2 D-isomerase (191 aa).

Positions 1 to 24 (MGALCTLWLGLVLLGVLGALQTSA) are cleaved as a signal peptide. Glutamine 25 is subject to Pyrrolidone carboxylic acid. N-linked (GlcNAc...) asparagine glycosylation is present at asparagine 51. The active-site Nucleophile is cysteine 65. The N-linked (GlcNAc...) asparagine glycan is linked to asparagine 78. An intrachain disulfide couples cysteine 89 to cysteine 186.

It belongs to the calycin superfamily. Lipocalin family. In terms of assembly, monomer. N- and O-glycosylated. Both N-glycosylation recognition sites are almost quantitatively occupied by N-glycans of the biantennary complex type, with a considerable proportion of structures bearing a bisecting GlcNAc. N-glycan at Asn-78: dHex1Hex5HexNAc4. Agalacto structure as well as sialylated and nonsialylated oligosaccharides bearing alpha2-3- and/or alpha2-6-linked NeuNAc are present.

It localises to the rough endoplasmic reticulum. The protein resides in the nucleus membrane. It is found in the golgi apparatus. The protein localises to the cytoplasm. Its subcellular location is the perinuclear region. It localises to the secreted. It carries out the reaction prostaglandin H2 = prostaglandin D2. Functionally, catalyzes the conversion of PGH2 to PGD2, a prostaglandin involved in smooth muscle contraction/relaxation and a potent inhibitor of platelet aggregation. Involved in a variety of CNS functions, such as sedation, NREM sleep and PGE2-induced allodynia, and may have an anti-apoptotic role in oligodendrocytes. Binds small non-substrate lipophilic molecules, including biliverdin, bilirubin, retinal, retinoic acid and thyroid hormone, and may act as a scavenger for harmful hydrophobic molecules and as a secretory retinoid and thyroid hormone transporter. Possibly involved in development and maintenance of the blood-brain, blood-retina, blood-aqueous humor and blood-testis barrier. It is likely to play important roles in both maturation and maintenance of the central nervous system and male reproductive system. Involved in PLA2G3-dependent maturation of mast cells. PLA2G3 is secreted by immature mast cells and acts on nearby fibroblasts upstream to PTDGS to synthesize PGD2, which in turn promotes mast cell maturation and degranulation via PTGDR. The chain is Prostaglandin-H2 D-isomerase (PTGDS) from Canis lupus familiaris (Dog).